The sequence spans 60 residues: Cytochrome c oxidase assembly protein COX14 homolog (60 aa).

The helical transmembrane segment at 10 to 32 (VGYRLFSGSMMLLTVYGGYLCVV) threads the bilayer.

It is found in the mitochondrion membrane. Plays a role in the assembly or stability of the cytochrome c oxidase complex (COX). This is Cytochrome c oxidase assembly protein COX14 homolog from Danio rerio (Zebrafish).